The primary structure comprises 930 residues: Protein translocase subunit SecA (930 aa).

ATP contacts are provided by residues Q87, 105 to 109, and D516; that span reads GEGKT. Zn(2+) is bound by residues C914, C916, C925, and H926.

This sequence belongs to the SecA family. As to quaternary structure, monomer and homodimer. Part of the essential Sec protein translocation apparatus which comprises SecA, SecYEG and auxiliary proteins SecDF-YajC and YidC. Requires Zn(2+) as cofactor.

It localises to the cell inner membrane. The protein localises to the cytoplasm. The enzyme catalyses ATP + H2O + cellular proteinSide 1 = ADP + phosphate + cellular proteinSide 2.. Functionally, part of the Sec protein translocase complex. Interacts with the SecYEG preprotein conducting channel. Has a central role in coupling the hydrolysis of ATP to the transfer of proteins into and across the cell membrane, serving both as a receptor for the preprotein-SecB complex and as an ATP-driven molecular motor driving the stepwise translocation of polypeptide chains across the membrane. In Variovorax paradoxus (strain S110), this protein is Protein translocase subunit SecA.